A 513-amino-acid chain; its full sequence is ATP synthase subunit alpha (513 aa).

Residue 169–176 participates in ATP binding; sequence GDRQTGKT.

It belongs to the ATPase alpha/beta chains family. As to quaternary structure, F-type ATPases have 2 components, CF(1) - the catalytic core - and CF(0) - the membrane proton channel. CF(1) has five subunits: alpha(3), beta(3), gamma(1), delta(1), epsilon(1). CF(0) has three main subunits: a(1), b(2) and c(9-12). The alpha and beta chains form an alternating ring which encloses part of the gamma chain. CF(1) is attached to CF(0) by a central stalk formed by the gamma and epsilon chains, while a peripheral stalk is formed by the delta and b chains.

It is found in the cell inner membrane. It catalyses the reaction ATP + H2O + 4 H(+)(in) = ADP + phosphate + 5 H(+)(out). In terms of biological role, produces ATP from ADP in the presence of a proton gradient across the membrane. The alpha chain is a regulatory subunit. The sequence is that of ATP synthase subunit alpha from Ralstonia nicotianae (strain ATCC BAA-1114 / GMI1000) (Ralstonia solanacearum).